The sequence spans 254 residues: Type III pantothenate kinase (254 aa).

7–14 provides a ligand contact to ATP; the sequence is DVGNTRLK. Residues Y96 and 103-106 each bind substrate; that span reads GSDR. D105 functions as the Proton acceptor in the catalytic mechanism. ATP is bound at residue T133. T183 is a substrate binding site.

It belongs to the type III pantothenate kinase family. Homodimer. NH4(+) serves as cofactor. K(+) is required as a cofactor.

It is found in the cytoplasm. The enzyme catalyses (R)-pantothenate + ATP = (R)-4'-phosphopantothenate + ADP + H(+). It participates in cofactor biosynthesis; coenzyme A biosynthesis; CoA from (R)-pantothenate: step 1/5. In terms of biological role, catalyzes the phosphorylation of pantothenate (Pan), the first step in CoA biosynthesis. The chain is Type III pantothenate kinase from Paracidovorax citrulli (strain AAC00-1) (Acidovorax citrulli).